The chain runs to 320 residues: Cytochrome c1-1, heme protein, mitochondrial (320 aa).

The transit peptide at 1–77 directs the protein to the mitochondrion; sequence MSLGKKIRIG…LLSFATIAYS (77 aa). At 78-280 the chain is on the mitochondrial intermembrane side; that stretch reads DEAEHGLECP…WAAEPEMEER (203 aa). The region spanning 103–210 is the Cytochrome c domain; it reads ASIRRGHQVY…NGQNYVFALL (108 aa). Heme c-binding residues include C116, C119, H120, and M239. Residues 281–301 traverse the membrane as a helical segment; sequence KLMGFKWIFVLSLALLQAAYY. Residues 302–320 are Mitochondrial matrix-facing; the sequence is RRLRWSVLKSRKLVLDVVN.

The protein belongs to the cytochrome c family. Component of the ubiquinol-cytochrome c oxidoreductase (cytochrome b-c1 complex, complex III, CIII), a multisubunit enzyme composed of 3 respiratory subunits cytochrome b, cytochrome c1 and Rieske protein, 2 core protein subunits, and additional low-molecular weight protein subunits. The complex exists as an obligatory dimer and forms supercomplexes (SCs) in the inner mitochondrial membrane with cytochrome c oxidase (complex IV, CIV). Heme c is required as a cofactor. In all tissues analyzed.

Its subcellular location is the mitochondrion inner membrane. The catalysed reaction is a quinol + 2 Fe(III)-[cytochrome c](out) = a quinone + 2 Fe(II)-[cytochrome c](out) + 2 H(+)(out). Component of the ubiquinol-cytochrome c oxidoreductase, a multisubunit transmembrane complex that is part of the mitochondrial electron transport chain which drives oxidative phosphorylation. The respiratory chain contains 3 multisubunit complexes succinate dehydrogenase (complex II, CII), ubiquinol-cytochrome c oxidoreductase (cytochrome b-c1 complex, complex III, CIII) and cytochrome c oxidase (complex IV, CIV), that cooperate to transfer electrons derived from NADH and succinate to molecular oxygen, creating an electrochemical gradient over the inner membrane that drives transmembrane transport and the ATP synthase. The cytochrome b-c1 complex catalyzes electron transfer from ubiquinol to cytochrome c, linking this redox reaction to translocation of protons across the mitochondrial inner membrane, with protons being carried across the membrane as hydrogens on the quinol. In the process called Q cycle, 2 protons are consumed from the matrix, 4 protons are released into the intermembrane space and 2 electrons are passed to cytochrome c. Cytochrome c1 is a catalytic core subunit containing a c-type heme. It transfers electrons from the [2Fe-2S] iron-sulfur cluster of the Rieske protein to cytochrome c. This is Cytochrome c1-1, heme protein, mitochondrial (CYCL) from Solanum tuberosum (Potato).